A 408-amino-acid chain; its full sequence is Probable medium-chain specific acyl-CoA dehydrogenase 2, mitochondrial (408 aa).

A mitochondrion-targeting transit peptide spans 1 to 5 (MLSRL). FAD contacts are provided by residues 143 to 152 (YCVTEPGAGS) and 176 to 178 (WIT). A substrate-binding site is contributed by serine 152. 263 to 266 (DMTR) serves as a coordination point for substrate. Residues 291–293 (RKA), 301–302 (HQ), and 355–359 (MLFRC) each bind FAD. Catalysis depends on glutamate 382, which acts as the Proton acceptor. Substrate is bound at residue glycine 383. 384–386 (TSQ) contacts FAD. Arginine 394 is a binding site for substrate.

This sequence belongs to the acyl-CoA dehydrogenase family. As to quaternary structure, homotetramer. FAD is required as a cofactor.

It is found in the mitochondrion matrix. The catalysed reaction is a medium-chain 2,3-saturated fatty acyl-CoA + oxidized [electron-transfer flavoprotein] + H(+) = a medium-chain (2E)-enoyl-CoA + reduced [electron-transfer flavoprotein]. It functions in the pathway lipid metabolism; mitochondrial fatty acid beta-oxidation. This enzyme is specific for acyl chain lengths of 4 to 16. This is Probable medium-chain specific acyl-CoA dehydrogenase 2, mitochondrial from Caenorhabditis briggsae.